The following is a 149-amino-acid chain: Cytochrome c-555 (149 aa).

A signal peptide spans 1-20 (MKRTMIVVTTLLLGAGAVMA). Heme c-binding residues include M32, C137, C140, and H141.

As to quaternary structure, monomer. In terms of processing, binds 1 heme c group covalently per subunit.

It localises to the periplasm. Its function is as follows. Low-spin monoheme cytochrome. The sequence is that of Cytochrome c-555 (cycC) from Bradyrhizobium diazoefficiens (strain JCM 10833 / BCRC 13528 / IAM 13628 / NBRC 14792 / USDA 110).